A 331-amino-acid chain; its full sequence is MEQVFFDIYQKAKNDEISKEEALFILKAEDKYIPLIVYLTSKLKDEFFDSQKFEFCSIINAKSGACSEDCKFCAQSKFYKTPINIYKLVDKEELVEGAIRGVEFGANRYCMVLSSRAASDEEVEKLCEAVQEIKAQNIPINVCVSAGTIGLESLLKLKEAGVTRINHNLETSENYFPNIVSTHTWKERLETIKNVQKAGLSTCSGVIFGLGETDEDRVDLAFVYKELGVDSIPLNFLMPIPNTPLENNKPLRALDALKIIAMFRFINKSAELRLCGGREQTLGDFHGMAAFMTNALMAGGYLTRAGRDIKKDYKMLEDMNLERLTSEEVCK.

A Radical SAM core domain is found at 48–278 (FDSQKFEFCS…SAELRLCGGR (231 aa)). The [4Fe-4S] cluster site is built by C66, C70, and C73. The [2Fe-2S] cluster site is built by C110, C143, C203, and R273.

Belongs to the radical SAM superfamily. Biotin synthase family. Homodimer. The cofactor is [4Fe-4S] cluster. Requires [2Fe-2S] cluster as cofactor.

The enzyme catalyses (4R,5S)-dethiobiotin + (sulfur carrier)-SH + 2 reduced [2Fe-2S]-[ferredoxin] + 2 S-adenosyl-L-methionine = (sulfur carrier)-H + biotin + 2 5'-deoxyadenosine + 2 L-methionine + 2 oxidized [2Fe-2S]-[ferredoxin]. The protein operates within cofactor biosynthesis; biotin biosynthesis; biotin from 7,8-diaminononanoate: step 2/2. Catalyzes the conversion of dethiobiotin (DTB) to biotin by the insertion of a sulfur atom into dethiobiotin via a radical-based mechanism. The chain is Biotin synthase from Hydrogenobaculum sp. (strain Y04AAS1).